The chain runs to 30 residues: LIM and SH3 domain protein 1 (30 aa).

At M1 the chain carries N-acetylmethionine. An LIM zinc-binding domain is found at 5 to 30 (CARCGKIVYPTEKVNCLDKFWHKACF).

As to quaternary structure, interacts with F-actin. Interacts with ANKRD54. Interacts with KBTBD10. Phosphorylated.

The protein resides in the cytoplasm. Its subcellular location is the cell cortex. It localises to the cytoskeleton. Plays an important role in the regulation of dynamic actin-based, cytoskeletal activities. Agonist-dependent changes in LASP1 phosphorylation may also serve to regulate actin-associated ion transport activities, not only in the parietal cell but also in certain other F-actin-rich secretory epithelial cell types. This chain is LIM and SH3 domain protein 1 (LASP1), found in Sus scrofa (Pig).